The primary structure comprises 565 residues: Sulfite reductase [NADPH] hemoprotein beta-component (565 aa).

Cys429, Cys435, Cys474, and Cys478 together coordinate [4Fe-4S] cluster. Residue Cys478 coordinates siroheme.

Belongs to the nitrite and sulfite reductase 4Fe-4S domain family. In terms of assembly, alpha(8)-beta(8). The alpha component is a flavoprotein, the beta component is a hemoprotein. Siroheme is required as a cofactor. [4Fe-4S] cluster serves as cofactor.

The enzyme catalyses hydrogen sulfide + 3 NADP(+) + 3 H2O = sulfite + 3 NADPH + 4 H(+). It functions in the pathway sulfur metabolism; hydrogen sulfide biosynthesis; hydrogen sulfide from sulfite (NADPH route): step 1/1. Its function is as follows. Component of the sulfite reductase complex that catalyzes the 6-electron reduction of sulfite to sulfide. This is one of several activities required for the biosynthesis of L-cysteine from sulfate. The protein is Sulfite reductase [NADPH] hemoprotein beta-component of Shewanella oneidensis (strain ATCC 700550 / JCM 31522 / CIP 106686 / LMG 19005 / NCIMB 14063 / MR-1).